Here is a 155-residue protein sequence, read N- to C-terminus: SsrA-binding protein (155 aa).

Belongs to the SmpB family.

Its subcellular location is the cytoplasm. Required for rescue of stalled ribosomes mediated by trans-translation. Binds to transfer-messenger RNA (tmRNA), required for stable association of tmRNA with ribosomes. tmRNA and SmpB together mimic tRNA shape, replacing the anticodon stem-loop with SmpB. tmRNA is encoded by the ssrA gene; the 2 termini fold to resemble tRNA(Ala) and it encodes a 'tag peptide', a short internal open reading frame. During trans-translation Ala-aminoacylated tmRNA acts like a tRNA, entering the A-site of stalled ribosomes, displacing the stalled mRNA. The ribosome then switches to translate the ORF on the tmRNA; the nascent peptide is terminated with the 'tag peptide' encoded by the tmRNA and targeted for degradation. The ribosome is freed to recommence translation, which seems to be the essential function of trans-translation. In Streptococcus pyogenes serotype M4 (strain MGAS10750), this protein is SsrA-binding protein.